A 487-amino-acid polypeptide reads, in one-letter code: MEKSWFNLMFSKGELEYRGELSKAMDSFAPSEKTTLSQDRFIYDMDKNFYGWGERSSYSTNVDLLVSSKDIRNFISDDTFFVRDGNKNSYSIYFDIKKKKFEIDNDLSDLEFFFYSYCSSSYLNNRLKGDNDLHYDPYIKDTKYNCTNHINSCIDSYFRSHICIDSNFLSDSNNSNESYIYNFICSESGKIRESKNYKIRTNRNRSNLMSSKDFDITQNYNQLWIQCDNCYGLMYKKVKMNVCEQCGHYLKMSSSERIELSIDPGTWNPMDEDMVSADPIKFHSREEPYKNRIDSAQKTTGLTDAVQTGTGQLNGIPVALGVMDFKFLGGSMGSVVGEKITRLIEYATNQRLPLILVCSSGGARMQEGSLSLMQMAKISSVLCDYQSSKKLFYISILTSPTTGGVTASFGMLGDIIIAEPYAYIAFAGKRVIEQTLKKAVPEGSQAAESLLRKGLLDAIVPRNPLKGVLSELFQLHAFFPLKKNEIK.

A CoA carboxyltransferase N-terminal domain is found at 223 to 487 (LWIQCDNCYG…FFPLKKNEIK (265 aa)). Zn(2+)-binding residues include C227, C230, C243, and C246. Residues 227-246 (CDNCYGLMYKKVKMNVCEQC) form a C4-type zinc finger.

Belongs to the AccD/PCCB family. Acetyl-CoA carboxylase is a heterohexamer composed of biotin carboxyl carrier protein, biotin carboxylase and 2 subunits each of ACCase subunit alpha and ACCase plastid-coded subunit beta (accD). Zn(2+) is required as a cofactor.

The protein localises to the plastid. Its subcellular location is the chloroplast stroma. It catalyses the reaction N(6)-carboxybiotinyl-L-lysyl-[protein] + acetyl-CoA = N(6)-biotinyl-L-lysyl-[protein] + malonyl-CoA. It functions in the pathway lipid metabolism; malonyl-CoA biosynthesis; malonyl-CoA from acetyl-CoA: step 1/1. In terms of biological role, component of the acetyl coenzyme A carboxylase (ACC) complex. Biotin carboxylase (BC) catalyzes the carboxylation of biotin on its carrier protein (BCCP) and then the CO(2) group is transferred by the transcarboxylase to acetyl-CoA to form malonyl-CoA. The protein is Acetyl-coenzyme A carboxylase carboxyl transferase subunit beta, chloroplastic of Lepidium virginicum (Virginia pepperweed).